The chain runs to 257 residues: Large ribosomal subunit protein uL3 (257 aa).

A disordered region spans residues 232 to 257; that stretch reads LKAPKKQKTKVETNQVNPKIEEEKTK.

The protein belongs to the universal ribosomal protein uL3 family. In terms of assembly, part of the 50S ribosomal subunit. Forms a cluster with proteins L14 and L19.

Functionally, one of the primary rRNA binding proteins, it binds directly near the 3'-end of the 23S rRNA, where it nucleates assembly of the 50S subunit. This Mycoplasma genitalium (strain ATCC 33530 / DSM 19775 / NCTC 10195 / G37) (Mycoplasmoides genitalium) protein is Large ribosomal subunit protein uL3.